Here is a 311-residue protein sequence, read N- to C-terminus: Putative prophage capsid protein YqbE (311 aa).

The protein belongs to the encapsulin family. Family 3 subfamily.

Functionally, possibly a prophage capsid protein. The protein is Putative prophage capsid protein YqbE (yqbE) of Bacillus subtilis (strain 168).